Here is a 243-residue protein sequence, read N- to C-terminus: Ribonuclease 3 (243 aa).

In terms of domain architecture, RNase III spans 15-144 (NDTISKIINY…LIGAIYIDGG (130 aa)). A Mg(2+)-binding site is contributed by Glu57. Asp61 is an active-site residue. 2 residues coordinate Mg(2+): Asn130 and Glu133. Glu133 is a catalytic residue. A DRBM domain is found at 169 to 238 (DPKTSLQEWT…AELMLEKINN (70 aa)).

The protein belongs to the ribonuclease III family. As to quaternary structure, homodimer. Mg(2+) is required as a cofactor.

It is found in the cytoplasm. It catalyses the reaction Endonucleolytic cleavage to 5'-phosphomonoester.. Functionally, digests double-stranded RNA. Involved in the processing of primary rRNA transcript to yield the immediate precursors to the large and small rRNAs (23S and 16S). Processes some mRNAs, and tRNAs when they are encoded in the rRNA operon. Processes pre-crRNA and tracrRNA of type II CRISPR loci if present in the organism. The sequence is that of Ribonuclease 3 from Wolbachia sp. subsp. Brugia malayi (strain TRS).